We begin with the raw amino-acid sequence, 143 residues long: Interleukin-3 (143 aa).

A signal peptide spans methionine 1–glutamine 19. A disulfide bridge links cysteine 35 with cysteine 103. N-linked (GlcNAc...) asparagine glycosylation is present at asparagine 89.

It belongs to the IL-3 family. In terms of assembly, monomer. In terms of tissue distribution, activated T-cells, mast cells, natural killer cells.

Its subcellular location is the secreted. Its function is as follows. Granulocyte/macrophage colony-stimulating factors are cytokines that act in hematopoiesis by controlling the production, differentiation, and function of 2 related white cell populations of the blood, the granulocytes and the monocytes-macrophages. Functionally, this CSF induces granulocytes, macrophages, mast cells, stem cells, erythroid cells, eosinophils and megakaryocytes. The sequence is that of Interleukin-3 (IL3) from Macaca mulatta (Rhesus macaque).